The chain runs to 658 residues: Threonine--tRNA ligase (658 aa).

In terms of domain architecture, TGS spans 1–61 (MSDVRVIIQR…RDGESVEPVE (61 aa)). The segment at 259-554 (DHRKLGNELD…LLEHYAGAFP (296 aa)) is catalytic. Residues Cys-353, His-404, and His-531 each contribute to the Zn(2+) site.

The protein belongs to the class-II aminoacyl-tRNA synthetase family. As to quaternary structure, homodimer. It depends on Zn(2+) as a cofactor.

Its subcellular location is the cytoplasm. It carries out the reaction tRNA(Thr) + L-threonine + ATP = L-threonyl-tRNA(Thr) + AMP + diphosphate + H(+). In terms of biological role, catalyzes the attachment of threonine to tRNA(Thr) in a two-step reaction: L-threonine is first activated by ATP to form Thr-AMP and then transferred to the acceptor end of tRNA(Thr). Also edits incorrectly charged L-seryl-tRNA(Thr). This chain is Threonine--tRNA ligase, found in Streptomyces griseus subsp. griseus (strain JCM 4626 / CBS 651.72 / NBRC 13350 / KCC S-0626 / ISP 5235).